A 614-amino-acid chain; its full sequence is Zinc finger protein 276 (614 aa).

Positions 1–50 (MKRDRLGRFLSPGSSRQCGASDGGGGVSRTRGRPSLSGGPRVDGATARRA) are disordered. The ZAD domain maps to 77–163 (GHCRLCHGKF…LQRVNASPAG (87 aa)). 4 residues coordinate Zn(2+): C79, C82, C136, and C139. The segment at 268–420 (APRLPQHRGW…KKPGPKPGWK (153 aa)) is disordered. Over residues 357 to 369 (SDLSEGDVLSEDE) the composition is skewed to acidic residues. The segment covering 386–408 (YPERKVSGKKSESKEAKKSEEPR) has biased composition (basic and acidic residues). Positions 409 to 420 (IRKKPGPKPGWK) are enriched in basic residues. 5 consecutive C2H2-type zinc fingers follow at residues 434–458 (YKCP…IKEH), 465–490 (RPCP…KLIH), 496–518 (YICD…QMRH), 524–546 (LQCE…MTKH), and 554–577 (FACD…SMVH). The disordered stretch occupies residues 583 to 614 (QDKALPLEAEPPPGPPSPSVTTEGQAVKPEPT). Residues 591 to 600 (AEPPPGPPSP) are compositionally biased toward pro residues.

It localises to the nucleus. The protein localises to the chromosome. The protein resides in the centromere. Its subcellular location is the kinetochore. Functionally, may be involved in transcriptional regulation. The polypeptide is Zinc finger protein 276 (ZNF276) (Homo sapiens (Human)).